The chain runs to 130 residues: Small ribosomal subunit protein uS11 (130 aa).

This sequence belongs to the universal ribosomal protein uS11 family. Part of the 30S ribosomal subunit. Interacts with proteins S7 and S18. Binds to IF-3.

Its function is as follows. Located on the platform of the 30S subunit, it bridges several disparate RNA helices of the 16S rRNA. Forms part of the Shine-Dalgarno cleft in the 70S ribosome. The sequence is that of Small ribosomal subunit protein uS11 from Campylobacter fetus subsp. fetus (strain 82-40).